The following is a 144-amino-acid chain: Large ribosomal subunit protein uL15 (144 aa).

A disordered region spans residues 1-48; sequence MRLNTLSPAAGSKSAAKRVGRGIGSGTGKTCGRGHKGQKSRSGGGVRI. Over residues 21 to 31 the composition is skewed to gly residues; sequence RGIGSGTGKTC.

It belongs to the universal ribosomal protein uL15 family. As to quaternary structure, part of the 50S ribosomal subunit.

Binds to the 23S rRNA. This is Large ribosomal subunit protein uL15 from Shewanella woodyi (strain ATCC 51908 / MS32).